Reading from the N-terminus, the 886-residue chain is Putative leucine-rich repeat receptor-like serine/threonine-protein kinase At2g14440 (886 aa).

The N-terminal stretch at 1-23 is a signal peptide; that stretch reads METRSKLMLLACATFSIISLVKS. The Extracellular portion of the chain corresponds to 24-528; the sequence is QNQQGFISLY…KHQPKSWLVA (505 aa). N49, N69, N232, N236, N259, N292, N434, N447, N458, and N471 each carry an N-linked (GlcNAc...) asparagine glycan. LRR repeat units lie at residues 413–436, 437–460, 461–483, and 485–507; these read RIIS…QNLT, MLRE…QNLT, MLRE…LATI, and PLLV…LQDR. A helical membrane pass occupies residues 529-549; the sequence is IVASISCVAVTIIVLVLIFIF. Residues 550-886 are Cytoplasmic-facing; it reads RRRKSSTRKV…TFISDIPSAR (337 aa). The 270-residue stretch at 581-850 folds into the Protein kinase domain; sequence NNFEVVLGKG…NMTRVAHELN (270 aa). Residues 587–595 and K608 contribute to the ATP site; that span reads LGKGGFGVV. Y653 bears the Phosphotyrosine mark. Residue D705 is the Proton acceptor of the active site. Position 739 is a phosphoserine (S739). T740 and T745 each carry phosphothreonine. Position 753 is a phosphotyrosine (Y753). The segment at 863–886 is disordered; sequence SQDQNSSKSSGHTVTFISDIPSAR. Polar residues predominate over residues 865-878; the sequence is DQNSSKSSGHTVTF.

The protein belongs to the protein kinase superfamily. Ser/Thr protein kinase family.

It is found in the cell membrane. The enzyme catalyses L-seryl-[protein] + ATP = O-phospho-L-seryl-[protein] + ADP + H(+). It catalyses the reaction L-threonyl-[protein] + ATP = O-phospho-L-threonyl-[protein] + ADP + H(+). This is Putative leucine-rich repeat receptor-like serine/threonine-protein kinase At2g14440 from Arabidopsis thaliana (Mouse-ear cress).